Here is a 530-residue protein sequence, read N- to C-terminus: RNA-binding protein 39 (530 aa).

The segment at 1–146 is disordered; the sequence is MADDIDIEAM…PVREPIDNLT (146 aa). A2 carries the post-translational modification N-acetylalanine. Basic and acidic residues predominate over residues 14-32; that stretch reads PYKKDENKLNSANGHEERS. Composition is skewed to basic residues over residues 33–56 and 64–95; these read KKRKKSKSRSRSHERKRSKSKERK and KKSKSRERKRSRSKERRRSRSRSRDRRFRGRY. Y95 carries the post-translational modification Phosphotyrosine. Phosphoserine occurs at positions 97 and 100. A Glycyl lysine isopeptide (Lys-Gly) (interchain with G-Cter in SUMO2) cross-link involves residue K111. S117 bears the Phosphoserine mark. K119 is covalently cross-linked (Glycyl lysine isopeptide (Lys-Gly) (interchain with G-Cter in SUMO2)). Basic residues predominate over residues 119-130; that stretch reads KLSRRRSRSKSP. Phosphoserine is present on residues S121 and S136. Over residues 131 to 146 the composition is skewed to basic and acidic residues; the sequence is FRKDKSPVREPIDNLT. Residue T146 is modified to Phosphothreonine. In terms of domain architecture, RRM 1 spans 153 to 230; sequence RTVFCMQLAA…VPIIVQASQA (78 aa). A Glycyl lysine isopeptide (Lys-Gly) (interchain with G-Cter in SUMO2) cross-link involves residue K244. The 79-residue stretch at 250-328 folds into the RRM 2 domain; the sequence is MRLYVGSLHF…RPMKVGHVTE (79 aa). Residues 291 to 355 form an activating domain region; the sequence is KGYGFITFSD…RTGIDLGTTG (65 aa). The segment at 291 to 406 is interaction with JUN; that stretch reads KGYGFITFSD…IDLQTRLSQQ (116 aa). Phosphoserine occurs at positions 334, 337, and 341. Residues 355-406 form an interaction with ESR1 and ESR2 region; sequence GRLQLMARLAEGTGLQIPPAAQQALQMSGSLAFGAVAEFSFVIDLQTRLSQQ. The interaction with NCOA6 stretch occupies residues 406-530; sequence QTEASALAAA…ATQLLVPSRR (125 aa). Residues 445–508 form the RRM 3 domain; it reads EIKDDVIEEC…KMITAAYVPL (64 aa).

It belongs to the splicing factor SR family. As to quaternary structure, interacts with NCOA6 and JUN. Interacts with ESR1 and ESR2, in the presence of estradiol (E2). Interacts with RSRC1 (via Arg/Ser-rich domain). Interacts with SF3B1. Interacts with ZNF106 (via N-terminus).

The protein resides in the nucleus. RNA-binding protein that acts as a pre-mRNA splicing factor. Acts by promoting exon inclusion via regulation of exon cassette splicing. Also acts as a transcriptional coactivator for steroid nuclear receptors ESR1/ER-alpha and ESR2/ER-beta, and JUN/AP-1, independently of the pre-mRNA splicing factor activity. This is RNA-binding protein 39 (Rbm39) from Mus musculus (Mouse).